The sequence spans 328 residues: MDVSLLLNVEGVKKTILHGGTGELPNFITGSRVTFHFRTMKCDEERTVIDDSKQVGQPMNIIIGNMFKLEVWETLLTSMRLGEVAEFWCDTIHTGVYPMLSRSLRQVAEGKDPTSWHVHTCGLANMFAYHTLGYEDLDELQKEPQPLIFLIELLQVEAPNEYQRETWNLNNEERMQAVPLLHGEGNRLYKLGRYDQAATKYQEAIVCLRNLQTKEKPWEVEWLKLEKMINTLILNYCQCLLKKEEYYEVLEHTSDILRHHPGIVKAYYMRARAHAEVWNAEEAKADLEKVLELEPSMRKAVLRELRLLESRLADKQEEERQRCRSMLG.

The PPIase FKBP-type domain maps to 53-145; sequence KQVGQPMNII…DLDELQKEPQ (93 aa). 3 TPR repeats span residues 178–211, 230–263, and 264–297; these read VPLL…LRNL, NTLI…HPGI, and VKAY…EPSM.

In terms of assembly, interacts with NUB1. As to expression, highly expressed in retina.

It is found in the cytoplasm. The protein resides in the nucleus. In terms of biological role, may be important in protein trafficking and/or protein folding and stabilization. This Rattus norvegicus (Rat) protein is Aryl-hydrocarbon-interacting protein-like 1 (Aipl1).